We begin with the raw amino-acid sequence, 352 residues long: Heat-inducible transcription repressor HrcA (352 aa).

Belongs to the HrcA family.

Its function is as follows. Negative regulator of class I heat shock genes (grpE-dnaK-dnaJ and groELS operons). Prevents heat-shock induction of these operons. This Latilactobacillus sakei (Lactobacillus sakei) protein is Heat-inducible transcription repressor HrcA.